Here is a 285-residue protein sequence, read N- to C-terminus: Nucleotide-binding protein FMG_1084 (285 aa).

Gly8–Ser15 provides a ligand contact to ATP. Asp59–Gly62 is a GTP binding site.

It belongs to the RapZ-like family.

Its function is as follows. Displays ATPase and GTPase activities. In Finegoldia magna (strain ATCC 29328 / DSM 20472 / WAL 2508) (Peptostreptococcus magnus), this protein is Nucleotide-binding protein FMG_1084.